Here is a 336-residue protein sequence, read N- to C-terminus: Fructose-1,6-bisphosphatase class 1 (336 aa).

Residues Glu90, Asp112, Leu114, and Asp115 each contribute to the Mg(2+) site. Residues 115 to 118, Asn211, and Lys277 contribute to the substrate site; that span reads DGSS. Residue Glu283 coordinates Mg(2+).

This sequence belongs to the FBPase class 1 family. As to quaternary structure, homotetramer. It depends on Mg(2+) as a cofactor.

The protein localises to the cytoplasm. It carries out the reaction beta-D-fructose 1,6-bisphosphate + H2O = beta-D-fructose 6-phosphate + phosphate. Its pathway is carbohydrate biosynthesis; gluconeogenesis. In Pseudomonas savastanoi pv. phaseolicola (strain 1448A / Race 6) (Pseudomonas syringae pv. phaseolicola (strain 1448A / Race 6)), this protein is Fructose-1,6-bisphosphatase class 1.